The primary structure comprises 99 residues: MNQERVFKVLLGPHISEKATGLADGKSQFVFKVATDATKLEIKKAVESLFSVKVQRVTTLNVKGKTKRTARGLGKRNDWKKAYIALQPGQDLDFATSAE.

This sequence belongs to the universal ribosomal protein uL23 family. Part of the 50S ribosomal subunit. Contacts protein L29, and trigger factor when it is bound to the ribosome.

In terms of biological role, one of the early assembly proteins it binds 23S rRNA. One of the proteins that surrounds the polypeptide exit tunnel on the outside of the ribosome. Forms the main docking site for trigger factor binding to the ribosome. This is Large ribosomal subunit protein uL23 from Pseudomonas aeruginosa (strain LESB58).